We begin with the raw amino-acid sequence, 577 residues long: Arginine--tRNA ligase (577 aa).

A 'HIGH' region motif is present at residues P122–H132.

This sequence belongs to the class-I aminoacyl-tRNA synthetase family. Monomer.

The protein localises to the cytoplasm. It catalyses the reaction tRNA(Arg) + L-arginine + ATP = L-arginyl-tRNA(Arg) + AMP + diphosphate. The protein is Arginine--tRNA ligase of Haemophilus influenzae (strain PittEE).